The chain runs to 336 residues: Alpha-N-acetylgalactosaminide alpha-2,6-sialyltransferase 5 (336 aa).

At 1-8 (MKTLMRHG) the chain is on the cytoplasmic side. A helical; Signal-anchor for type II membrane protein transmembrane segment spans residues 9–29 (LAVCLALTTMCTSLLLVYSSL). At 30–336 (GGQKERPPQQ…INHPENKPVF (307 aa)) the chain is on the lumenal side. The tract at residues 32 to 81 (QKERPPQQQQQQQQQQQQASATGSSQPAAESSTQQRPGVPAGPRPLDGYL) is disordered. The segment covering 38 to 49 (QQQQQQQQQQQQ) has biased composition (low complexity). The span at 50 to 67 (ASATGSSQPAAESSTQQR) shows a compositional bias: polar residues. Residues C96 and C245 are joined by a disulfide bond. N137 and N161 each carry an N-linked (GlcNAc...) asparagine glycan.

It belongs to the glycosyltransferase 29 family.

The protein localises to the golgi apparatus membrane. The enzyme catalyses a ganglioside GM1b (d18:1(4E)) + CMP-N-acetyl-beta-neuraminate = a ganglioside GD1alpha (d18:1(4E)) + CMP + H(+). It carries out the reaction N-acetyl-alpha-neuraminosyl-(2-&gt;3)-beta-D-galactosyl-(1-&gt;3)-N-acetyl-beta-D-glucosaminyl-(1-&gt;3)-beta-D-galactosyl-(1-&gt;4)-beta-D-glucosyl-(1&lt;-&gt;1')-N-acyl-sphing-4-enine + CMP-N-acetyl-beta-neuraminate = N-acetyl-alpha-neuraminosyl-(2-&gt;3)-beta-D-galactosyl-(1-&gt;3)-[N-acetyl-alpha-neuraminosyl-(2-&gt;6)]-N-acetyl-beta-D-glucosaminyl-(1-&gt;3)-beta-D-galactosyl-(1-&gt;4)-beta-D-glucosyl-(1&lt;-&gt;1')-N-acyl-sphing-4-enine + CMP + H(+). It functions in the pathway glycolipid biosynthesis. In terms of biological role, predominantly catalyzes the biosynthesis of ganglioside GD1alpha from GM1b in the brain, by transferring the sialyl group (N-acetyl-alpha-neuraminyl or NeuAc) from CMP-NeuAc to the GalNAc residue on the NeuAc-alpha-2,3-Gal-beta-1,3-GalNAc sequence of GM1b. GD1alpha is a critical molecule in the communication and interaction between neuronal cells and their supportive cells, particularly in brain tissues, and functions as an adhesion molecule in the process of metastasis. Also shows activity towards sialyl Lc4Cer (N-acetyl-alpha-neuraminosyl-(2-&gt;3)-beta-D-galactosyl-(1-&gt;3)-N-acetyl-beta-D-glucosaminyl-(1-&gt;3)-beta-D-galactosyl-(1-&gt;4)-beta-D-glucosyl-(1&lt;-&gt;1')-N-acyl-sphing-4-enine) generating disialyl Lc4Cer, which can lead to the synthesis of disialyl Lewis a (Le(a)), suggested to be a cancer-associated antigen. The chain is Alpha-N-acetylgalactosaminide alpha-2,6-sialyltransferase 5 (ST6GALNAC5) from Homo sapiens (Human).